The following is a 431-amino-acid chain: MTWLSGLYSIFVASAAFCSLGLILVAVILLSRKFLIKVHPCKLKINNDDSLTKTVDSGKTLLSSLLDSGIAIPSPCGGKAACKQCKVRITKNADEPLETDRSTFSKQQLEQGWRLSCQTKVQHDLCLEVEERYFNASSWEGTVVSNENVATFIKELVLSVDPSRPIPFKPGGYLQITVPPYKTNTSDWKQTMDPQYYSDWETFHLFDQIIDNLSLDTDSANKAYSLASYPAELPLIKFNVRIATPPFVDQAPDPTIPWGVCSSYIFSLKPGDKVMVSGPYGESFMKEDNRPVIFLIGGAGSSFGRSHILDLLLNKHSDRELTLWYGARSLKENIYQEEYEKLEKEFPNFHYHLVLSQPLQEDLDQGWDKNDPIKTNFLFKAFELGQLSHLPNPEDYLYYVCGPALHNSSILTLLDNYGVERSSIVLDDFGS.

A helical transmembrane segment spans residues 10 to 30 (IFVASAAFCSLGLILVAVILL). The 2Fe-2S ferredoxin-type domain occupies 41-133 (CKLKINNDDS…DLCLEVEERY (93 aa)). [2Fe-2S] cluster-binding residues include Cys76, Cys82, Cys85, and Cys117. Residues 136–286 (ASSWEGTVVS…SGPYGESFMK (151 aa)) enclose the FAD-binding FR-type domain. The segment at 289–413 (NRPVIFLIGG…ALHNSSILTL (125 aa)) is catalytic.

Belongs to the NqrF family. In terms of assembly, composed of six subunits; NqrA, NqrB, NqrC, NqrD, NqrE and NqrF. The cofactor is [2Fe-2S] cluster. Requires FAD as cofactor.

Its subcellular location is the cell inner membrane. The catalysed reaction is a ubiquinone + n Na(+)(in) + NADH + H(+) = a ubiquinol + n Na(+)(out) + NAD(+). Functionally, NQR complex catalyzes the reduction of ubiquinone-1 to ubiquinol by two successive reactions, coupled with the transport of Na(+) ions from the cytoplasm to the periplasm. The first step is catalyzed by NqrF, which accepts electrons from NADH and reduces ubiquinone-1 to ubisemiquinone by a one-electron transfer pathway. The sequence is that of Na(+)-translocating NADH-quinone reductase subunit F from Chlamydia trachomatis serovar D (strain ATCC VR-885 / DSM 19411 / UW-3/Cx).